Reading from the N-terminus, the 364-residue chain is NADH-quinone oxidoreductase subunit H (364 aa).

A run of 8 helical transmembrane segments spans residues 15 to 35 (LLVLGQIGLFTLVLLLSIAFL), 84 to 104 (AVFILAPILTCTLAFVTWAAI), 123 to 143 (VGVLYLFAISSLGVYGIIMGG), 169 to 189 (IGFVIVTVILLVGSMNLTTIV), 206 to 226 (YFPLIVVMVPMFVIFFISALA), 257 to 277 (LFMLGEYLNIVLMCAMMTILF), 302 to 322 (LSGLAWFMGKVLFCFFLFALV), and 341 to 361 (IFLPTSLAAVIIVAGYVTFVG).

The protein belongs to the complex I subunit 1 family. As to quaternary structure, NDH-1 is composed of 14 different subunits. Subunits NuoA, H, J, K, L, M, N constitute the membrane sector of the complex.

The protein resides in the cell inner membrane. The catalysed reaction is a quinone + NADH + 5 H(+)(in) = a quinol + NAD(+) + 4 H(+)(out). In terms of biological role, NDH-1 shuttles electrons from NADH, via FMN and iron-sulfur (Fe-S) centers, to quinones in the respiratory chain. The immediate electron acceptor for the enzyme in this species is believed to be ubiquinone. Couples the redox reaction to proton translocation (for every two electrons transferred, four hydrogen ions are translocated across the cytoplasmic membrane), and thus conserves the redox energy in a proton gradient. This subunit may bind ubiquinone. The protein is NADH-quinone oxidoreductase subunit H of Hyphomonas neptunium (strain ATCC 15444).